A 378-amino-acid polypeptide reads, in one-letter code: Schlafen family member 2 (378 aa).

The protein belongs to the Schlafen family. As to expression, mainly expressed in the thymus, lymph node and spleen.

Its subcellular location is the cytoplasm. Its function is as follows. tRNA-binding protein involved in T-cell mediated immunity. Plays a key role during the metabolic reprograming phase of activated T-cell, when T-cells produce reactive oxygen species (ROS): acts by binding tRNAs and protecting them from cleavage by the oxidative stress-activated ribonuclease angiogenin (ANG). Also required for T-cell quiescence maintenance. The chain is Schlafen family member 2 from Mus musculus (Mouse).